Here is a 180-residue protein sequence, read N- to C-terminus: Dual-action ribosomal maturation protein DarP (180 aa).

The segment covering 1 to 13 has biased composition (basic and acidic residues); sequence MKPDKTENTEHGI. The disordered stretch occupies residues 1–21; it reads MKPDKTENTEHGIEPVSKTKR.

Belongs to the DarP family.

The protein localises to the cytoplasm. Functionally, member of a network of 50S ribosomal subunit biogenesis factors which assembles along the 30S-50S interface, preventing incorrect 23S rRNA structures from forming. Promotes peptidyl transferase center (PTC) maturation. The polypeptide is Dual-action ribosomal maturation protein DarP (Methylobacillus flagellatus (strain ATCC 51484 / DSM 6875 / VKM B-1610 / KT)).